The following is a 123-amino-acid chain: Protein Wnt-7 (123 aa).

Residue S1 is the site of O-palmitoleoyl serine; by PORCN attachment. C89 and C104 are oxidised to a cystine. N-linked (GlcNAc...) asparagine glycosylation occurs at N90.

Belongs to the Wnt family. Palmitoleoylation is required for efficient binding to frizzled receptors. Depalmitoleoylation leads to Wnt signaling pathway inhibition.

The protein localises to the secreted. The protein resides in the extracellular space. It localises to the extracellular matrix. Its function is as follows. Ligand for members of the frizzled family of seven transmembrane receptors. Probable developmental protein. May be a signaling molecule which affects the development of discrete regions of tissues. Is likely to signal over only few cell diameters. The chain is Protein Wnt-7 (WNT-7) from Evasterias troschelii (Mottled sea star).